Here is a 166-residue protein sequence, read N- to C-terminus: uncharacterized protein (166 aa).

4Fe-4S ferredoxin-type domains are found at residues 3–33, 37–67, and 68–97; these read MKKI…GRIA, KDGK…EHKD, and GYVY…MEDK. [4Fe-4S] cluster is bound by residues Cys-13, Cys-16, Cys-19, Cys-23, Cys-46, Cys-49, Cys-54, Cys-58, Cys-77, Cys-80, Cys-83, Cys-87, Cys-101, Cys-104, Cys-111, and Cys-115.

[4Fe-4S] cluster serves as cofactor.

This is an uncharacterized protein from Methanocaldococcus jannaschii (strain ATCC 43067 / DSM 2661 / JAL-1 / JCM 10045 / NBRC 100440) (Methanococcus jannaschii).